The following is a 373-amino-acid chain: Histidinol-phosphate aminotransferase (373 aa).

Lys230 carries the N6-(pyridoxal phosphate)lysine modification.

This sequence belongs to the class-II pyridoxal-phosphate-dependent aminotransferase family. Histidinol-phosphate aminotransferase subfamily. Homodimer. The cofactor is pyridoxal 5'-phosphate.

The enzyme catalyses L-histidinol phosphate + 2-oxoglutarate = 3-(imidazol-4-yl)-2-oxopropyl phosphate + L-glutamate. Its pathway is amino-acid biosynthesis; L-histidine biosynthesis; L-histidine from 5-phospho-alpha-D-ribose 1-diphosphate: step 7/9. This is Histidinol-phosphate aminotransferase from Synechococcus elongatus (strain ATCC 33912 / PCC 7942 / FACHB-805) (Anacystis nidulans R2).